The chain runs to 355 residues: MIETDKLAAERIIAATPVSPNEEAFERALRPRQLEEYVGQEKVRGQLEIFIEAAKRRSESLDHVLLFGPPGLGKTTLAHIIAREMGVNLRQTSGPVLERAGDLAALLTNLEANDVLFIDEIHRLSPVVEEILYPALEDYQIDIMIGEGPAARSVKLDLQPFTLVGATTRAGMLTNPLRDRFGIVARLEFYNAEQLARIVTRSASLLHAQIHPDGAFEIAKRARGTPRIANRLLRRVRDFAEVKADGNITAQVADAALKMLDVDAVGFDLMDRKLLEAILHKFDGGPVGVDNLAAAIGEERDTIEDVLEPYLIQQGFLQRTPRGRVATLLTYRHFGLAAPDSSSSTLPGLWDSAAT.

Residues 4-190 are large ATPase domain (RuvB-L); it reads TDKLAAERII…FGIVARLEFY (187 aa). ATP contacts are provided by residues Leu29, Arg30, Gly71, Lys74, Thr75, Thr76, 137–139, Arg180, Tyr190, and Arg227; that span reads EDY. Thr75 contributes to the Mg(2+) binding site. Residues 191 to 261 are small ATPAse domain (RuvB-S); the sequence is NAEQLARIVT…VADAALKMLD (71 aa). The segment at 264–355 is head domain (RuvB-H); it reads AVGFDLMDRK…LPGLWDSAAT (92 aa). DNA contacts are provided by Arg300, Arg319, and Arg324.

It belongs to the RuvB family. As to quaternary structure, homohexamer. Forms an RuvA(8)-RuvB(12)-Holliday junction (HJ) complex. HJ DNA is sandwiched between 2 RuvA tetramers; dsDNA enters through RuvA and exits via RuvB. An RuvB hexamer assembles on each DNA strand where it exits the tetramer. Each RuvB hexamer is contacted by two RuvA subunits (via domain III) on 2 adjacent RuvB subunits; this complex drives branch migration. In the full resolvosome a probable DNA-RuvA(4)-RuvB(12)-RuvC(2) complex forms which resolves the HJ.

The protein localises to the cytoplasm. The enzyme catalyses ATP + H2O = ADP + phosphate + H(+). The RuvA-RuvB-RuvC complex processes Holliday junction (HJ) DNA during genetic recombination and DNA repair, while the RuvA-RuvB complex plays an important role in the rescue of blocked DNA replication forks via replication fork reversal (RFR). RuvA specifically binds to HJ cruciform DNA, conferring on it an open structure. The RuvB hexamer acts as an ATP-dependent pump, pulling dsDNA into and through the RuvAB complex. RuvB forms 2 homohexamers on either side of HJ DNA bound by 1 or 2 RuvA tetramers; 4 subunits per hexamer contact DNA at a time. Coordinated motions by a converter formed by DNA-disengaged RuvB subunits stimulates ATP hydrolysis and nucleotide exchange. Immobilization of the converter enables RuvB to convert the ATP-contained energy into a lever motion, pulling 2 nucleotides of DNA out of the RuvA tetramer per ATP hydrolyzed, thus driving DNA branch migration. The RuvB motors rotate together with the DNA substrate, which together with the progressing nucleotide cycle form the mechanistic basis for DNA recombination by continuous HJ branch migration. Branch migration allows RuvC to scan DNA until it finds its consensus sequence, where it cleaves and resolves cruciform DNA. This chain is Holliday junction branch migration complex subunit RuvB, found in Paraburkholderia xenovorans (strain LB400).